An 87-amino-acid chain; its full sequence is Phosphoribosyl-ATP pyrophosphatase (87 aa).

This sequence belongs to the PRA-PH family.

The protein resides in the cytoplasm. It carries out the reaction 1-(5-phospho-beta-D-ribosyl)-ATP + H2O = 1-(5-phospho-beta-D-ribosyl)-5'-AMP + diphosphate + H(+). It functions in the pathway amino-acid biosynthesis; L-histidine biosynthesis; L-histidine from 5-phospho-alpha-D-ribose 1-diphosphate: step 2/9. This is Phosphoribosyl-ATP pyrophosphatase from Saccharopolyspora erythraea (strain ATCC 11635 / DSM 40517 / JCM 4748 / NBRC 13426 / NCIMB 8594 / NRRL 2338).